The following is a 506-amino-acid chain: MAP kinase kinase MKK2/SSP33 (506 aa).

The tract at residues methionine 1–asparagine 69 is disordered. A compositionally biased stretch (polar residues) spans leucine 26–tyrosine 52. The span at serine 53–asparagine 69 shows a compositional bias: low complexity. Residues isoleucine 214–isoleucine 481 enclose the Protein kinase domain. ATP contacts are provided by residues leucine 220–valine 228 and lysine 243. Aspartate 342 serves as the catalytic Proton acceptor.

Belongs to the protein kinase superfamily. STE Ser/Thr protein kinase family. MAP kinase kinase subfamily.

The catalysed reaction is L-seryl-[protein] + ATP = O-phospho-L-seryl-[protein] + ADP + H(+). It catalyses the reaction L-threonyl-[protein] + ATP = O-phospho-L-threonyl-[protein] + ADP + H(+). The enzyme catalyses L-tyrosyl-[protein] + ATP = O-phospho-L-tyrosyl-[protein] + ADP + H(+). Its function is as follows. Serine/threonine protein kinase involved in a signal transduction pathway that plays a role in yeast cell morphogenesis and cell growth. This pathway seems to start by SMP3; then involves the kinase PKC1 that may act on the BCK1 kinase that then phosphorylates MKK1 and MKK2 which themselves phosphorylate the MPK1 kinase. The polypeptide is MAP kinase kinase MKK2/SSP33 (MKK2) (Saccharomyces cerevisiae (strain ATCC 204508 / S288c) (Baker's yeast)).